A 309-amino-acid polypeptide reads, in one-letter code: Ribonuclease Z (309 aa).

Residues His-63, His-65, Asp-67, His-68, His-143, Asp-213, and His-271 each contribute to the Zn(2+) site. Asp-67 serves as the catalytic Proton acceptor.

This sequence belongs to the RNase Z family. In terms of assembly, homodimer. Zn(2+) serves as cofactor.

It carries out the reaction Endonucleolytic cleavage of RNA, removing extra 3' nucleotides from tRNA precursor, generating 3' termini of tRNAs. A 3'-hydroxy group is left at the tRNA terminus and a 5'-phosphoryl group is left at the trailer molecule.. Functionally, zinc phosphodiesterase, which displays some tRNA 3'-processing endonuclease activity. Probably involved in tRNA maturation, by removing a 3'-trailer from precursor tRNA. This Phocaeicola vulgatus (strain ATCC 8482 / DSM 1447 / JCM 5826 / CCUG 4940 / NBRC 14291 / NCTC 11154) (Bacteroides vulgatus) protein is Ribonuclease Z.